The chain runs to 1079 residues: Eukaryotic translation initiation factor 5B (1079 aa).

The tract at residues 1–478 (MGKKGKKSGY…QAAPAESNVS (478 aa)) is disordered. Polar residues predominate over residues 22–38 (SGQNEYLDNTSQDSPQN). Positions 57 to 67 (SKKKKGKKNKG) are enriched in basic residues. Residues Ser73, Ser77, and Ser82 each carry the phosphoserine modification. Positions 105-114 (KKGKKGKKSK) are enriched in basic residues. Ser127 carries the phosphoserine modification. A compositionally biased stretch (low complexity) spans 160–169 (NNNESEAAAP). Positions 173–192 (PEVRVKTKKEKEREKKEREK) are enriched in basic and acidic residues. Basic residues predominate over residues 193 to 204 (LRKKQQQAKKKG). A compositionally biased stretch (polar residues) spans 207-233 (GEDTLASSEVSSEVDISTPAENDSSAK). The span at 253 to 293 (MLEEKRAREEEEQRIREEEARIAEEEKRLAEVEEARKEEAR) shows a compositional bias: basic and acidic residues. Low complexity-rich tracts occupy residues 321 to 334 (QQAL…QMLE) and 361 to 376 (RSGT…LESS). At Thr364 the chain carries Phosphothreonine. Residues 385-408 (EPQKDSKDDSEKVEKETEVERKEE) show a composition bias toward basic and acidic residues. Residues 409–431 (NEAEAEAVFDDWEAALEEPEVAE) show a composition bias toward acidic residues. Over residues 436-466 (VTEKKETDIKSDAVEHSIKDKEDSKTDKVDD) the composition is skewed to basic and acidic residues. In terms of domain architecture, tr-type G spans 482 to 700 (LRSPICCILG…LISLTQTRMS (219 aa)). The tract at residues 491–498 (GHVDTGKT) is G1. A GTP-binding site is contributed by 491 to 498 (GHVDTGKT). Residues 516–520 (GITQQ) form a G2 region. The tract at residues 555 to 558 (DTPG) is G3. The G4 stretch occupies residues 609–612 (NKVD). Residues 677 to 679 (SAQ) are G5.

It belongs to the TRAFAC class translation factor GTPase superfamily. Classic translation factor GTPase family. IF-2 subfamily. It depends on a monovalent cation as a cofactor.

The protein resides in the cytoplasm. The enzyme catalyses GTP + H2O = GDP + phosphate + H(+). In terms of biological role, plays a role in translation initiation. Translational GTPase that catalyzes the joining of the 40S and 60S subunits to form the 80S initiation complex with the initiator methionine-tRNA in the P-site base paired to the start codon. GTP binding and hydrolysis induces conformational changes in the enzyme that renders it active for productive interactions with the ribosome. The release of the enzyme after formation of the initiation complex is a prerequisite to form elongation-competent ribosomes. This is Eukaryotic translation initiation factor 5B from Schizosaccharomyces pombe (strain 972 / ATCC 24843) (Fission yeast).